We begin with the raw amino-acid sequence, 246 residues long: 1-(5-phosphoribosyl)-5-[(5-phosphoribosylamino)methylideneamino] imidazole-4-carboxamide isomerase (246 aa).

The active-site Proton acceptor is the Asp7. The active-site Proton donor is the Asp129.

It belongs to the HisA/HisF family.

It is found in the cytoplasm. The catalysed reaction is 1-(5-phospho-beta-D-ribosyl)-5-[(5-phospho-beta-D-ribosylamino)methylideneamino]imidazole-4-carboxamide = 5-[(5-phospho-1-deoxy-D-ribulos-1-ylimino)methylamino]-1-(5-phospho-beta-D-ribosyl)imidazole-4-carboxamide. It functions in the pathway amino-acid biosynthesis; L-histidine biosynthesis; L-histidine from 5-phospho-alpha-D-ribose 1-diphosphate: step 4/9. This is 1-(5-phosphoribosyl)-5-[(5-phosphoribosylamino)methylideneamino] imidazole-4-carboxamide isomerase from Buchnera aphidicola subsp. Acyrthosiphon pisum (strain Tuc7).